The following is a 438-amino-acid chain: Cysteine--tRNA ligase (438 aa).

C28 is a Zn(2+) binding site. The short motif at 30–40 (PTVYNHLHLGN) is the 'HIGH' region element. Positions 207, 232, and 236 each coordinate Zn(2+). The 'KMSKS' region motif lies at 264–268 (KMSKS). K267 is a binding site for ATP.

Belongs to the class-I aminoacyl-tRNA synthetase family. As to quaternary structure, monomer. It depends on Zn(2+) as a cofactor.

It is found in the cytoplasm. It catalyses the reaction tRNA(Cys) + L-cysteine + ATP = L-cysteinyl-tRNA(Cys) + AMP + diphosphate. In Aster yellows witches'-broom phytoplasma (strain AYWB), this protein is Cysteine--tRNA ligase.